A 213-amino-acid chain; its full sequence is Glycerol-3-phosphate acyltransferase (213 aa).

Helical transmembrane passes span I2–I22, A52–F74, P81–F100, V112–L132, V143–L163, and S164–R184.

The protein belongs to the PlsY family. As to quaternary structure, probably interacts with PlsX.

Its subcellular location is the cell membrane. The enzyme catalyses an acyl phosphate + sn-glycerol 3-phosphate = a 1-acyl-sn-glycero-3-phosphate + phosphate. It functions in the pathway lipid metabolism; phospholipid metabolism. Functionally, catalyzes the transfer of an acyl group from acyl-phosphate (acyl-PO(4)) to glycerol-3-phosphate (G3P) to form lysophosphatidic acid (LPA). This enzyme utilizes acyl-phosphate as fatty acyl donor, but not acyl-CoA or acyl-ACP. This Streptococcus pneumoniae (strain Hungary19A-6) protein is Glycerol-3-phosphate acyltransferase.